The chain runs to 372 residues: Chorismate synthase (372 aa).

2 residues coordinate NADP(+): R48 and R54. Residues 125 to 127 (RSS), 238 to 239 (NA), G278, 293 to 297 (KPTSS), and R319 each bind FMN.

The protein belongs to the chorismate synthase family. As to quaternary structure, homotetramer. It depends on FMNH2 as a cofactor.

The enzyme catalyses 5-O-(1-carboxyvinyl)-3-phosphoshikimate = chorismate + phosphate. It participates in metabolic intermediate biosynthesis; chorismate biosynthesis; chorismate from D-erythrose 4-phosphate and phosphoenolpyruvate: step 7/7. Functionally, catalyzes the anti-1,4-elimination of the C-3 phosphate and the C-6 proR hydrogen from 5-enolpyruvylshikimate-3-phosphate (EPSP) to yield chorismate, which is the branch point compound that serves as the starting substrate for the three terminal pathways of aromatic amino acid biosynthesis. This reaction introduces a second double bond into the aromatic ring system. In Xylella fastidiosa (strain 9a5c), this protein is Chorismate synthase.